Reading from the N-terminus, the 1992-residue chain is E3 ubiquitin-protein ligase TRIP12 (1992 aa).

Over residues 1–10 the composition is skewed to polar residues; it reads MSNRPNNNPG. A disordered region spans residues 1–398; that stretch reads MSNRPNNNPG…SGESESDDSE (398 aa). Ser2 carries the N-acetylserine modification. Ser12 is subject to Phosphoserine. Over residues 18 to 27 the composition is skewed to polar residues; sequence RNTAGAQPQD. A compositionally biased stretch (low complexity) spans 29–43; it reads SIGGRSCSSSSVVIV. Positions 48–70 are enriched in basic and acidic residues; the sequence is DPDRANTSEKQKTGQVPKKDNSR. Ser77, Ser85, and Ser100 each carry phosphoserine. Residues 78–88 show a composition bias toward polar residues; it reads PDYNRTNSPSS. Over residues 154 to 164 the composition is skewed to polar residues; sequence SSCIKSASVSE. Composition is skewed to low complexity over residues 175 to 188 and 196 to 215; these read PTKL…SAKA and SSSA…ASSA. Lys181 carries the N6-acetyllysine modification. Residues 280–290 show a composition bias toward polar residues; sequence PGSSKSETSKP. A phosphoserine mark is found at Ser310 and Ser312. Over residues 330 to 339 the composition is skewed to low complexity; sequence GSCASASRRG. Over residues 346–358 the composition is skewed to basic and acidic residues; that stretch reads GAAEARRQEKMAD. A compositionally biased stretch (polar residues) spans 362 to 371; that stretch reads NQETVNSSAA. The region spanning 749-836 is the WWE domain; the sequence is MLKKGNAQNT…DPELAKSFIK (88 aa). The tract at residues 938-1044 is disordered; it reads SLLTSPPKAC…QSPKSSFLAS (107 aa). Ser942 carries the post-translational modification Phosphoserine. Residues 948–960 are compositionally biased toward polar residues; sequence TNGSGSLGSTPSV. Residues 961 to 973 are compositionally biased toward low complexity; that stretch reads NSGTATAATNASA. Residues Ser991 and Ser997 each carry the phosphoserine modification. Residues 1001 to 1014 are compositionally biased toward basic residues; sequence KRKRLPKRGSRRPK. Phosphoserine is present on Ser1016. Basic and acidic residues predominate over residues 1017–1026; sequence PPRDDDKVDN. Low complexity predominate over residues 1029–1040; the sequence is KSPTTTQSPKSS. 5 positions are modified to phosphoserine: Ser1030, Ser1317, Ser1322, Ser1329, and Ser1376. Position 1377 is a phosphothreonine (Thr1377). Disordered stretches follow at residues 1407 to 1434 and 1568 to 1587; these read SNKD…AKKH and TNPE…PRLD. Residue Lys1425 is modified to N6-acetyllysine. A Phosphoserine modification is found at Ser1427. The K-box stretch occupies residues 1496-1570; sequence EIIPTSEFIN…AMQRLLDTNP (75 aa). Residues 1885 to 1992 form the HECT domain; that stretch reads PDHGYTHDSR…REGQQSFHLS (108 aa). The active-site Glycyl thioester intermediate is the Cys1959.

Belongs to the UPL family. K-HECT subfamily. In terms of assembly, interacts with MYC; leading to disrupt interaction with isoform p19ARF/ARF of CDKN2A. Interacts with TRADD; leading to disrupt interaction with isoform p19ARF/ARF of CDKN2A. Interacts with SMARCC1; leading to disrupt interaction with SMARCE1.

The protein resides in the nucleus. It is found in the nucleoplasm. The catalysed reaction is S-ubiquitinyl-[E2 ubiquitin-conjugating enzyme]-L-cysteine + [acceptor protein]-L-lysine = [E2 ubiquitin-conjugating enzyme]-L-cysteine + N(6)-ubiquitinyl-[acceptor protein]-L-lysine.. It participates in protein modification; protein ubiquitination. Its function is as follows. E3 ubiquitin-protein ligase involved in ubiquitin fusion degradation (UFD) pathway and regulation of DNA repair. Part of the ubiquitin fusion degradation (UFD) pathway, a process that mediates ubiquitination of protein at their N-terminus, regardless of the presence of lysine residues in target proteins. Acts as a key regulator of DNA damage response by acting as a suppressor of RNF168, an E3 ubiquitin-protein ligase that promotes accumulation of 'Lys-63'-linked histone H2A and H2AX at DNA damage sites, thereby acting as a guard against excessive spreading of ubiquitinated chromatin at damaged chromosomes. In normal cells, mediates ubiquitination and degradation of isoform p19ARF/ARF of CDKN2A, a lysine-less tumor suppressor required for p53/TP53 activation under oncogenic stress. In cancer cells, however, isoform p19ARF/ARF and TRIP12 are located in different cell compartments, preventing isoform p19ARF/ARF ubiquitination and degradation. Does not mediate ubiquitination of isoform p16-INK4a of CDKN2A. Also catalyzes ubiquitination of NAE1 and SMARCE1, leading to their degradation. Ubiquitination and degradation of target proteins is regulated by interaction with proteins such as MYC, TRADD or SMARCC1, which disrupt the interaction between TRIP12 and target proteins. Mediates ubiquitination of ASXL1: following binding to N(6)-methyladenosine methylated DNA, ASXL1 is ubiquitinated by TRIP12, leading to its degradation and subsequent inactivation of the PR-DUB complex. The protein is E3 ubiquitin-protein ligase TRIP12 (TRIP12) of Bos taurus (Bovine).